Reading from the N-terminus, the 250-residue chain is Cyclin-Q (250 aa).

An N-acetylmethionine modification is found at M1. The span at 1 to 10 shows a compositional bias: basic and acidic residues; sequence MEAVRPDSCE. Positions 1–22 are disordered; that stretch reads MEAVRPDSCERGTAAARAEERP.

Belongs to the cyclin family. Cyclin-like FAM58 subfamily. As to quaternary structure, associates with CDK10 to promote its kinase activity.

Activating cyclin for the cyclin-associated kinase CDK10. The protein is Cyclin-Q (Ccnq) of Rattus norvegicus (Rat).